The chain runs to 1279 residues: ATP-dependent helicase/nuclease subunit A (1279 aa).

The 496-residue stretch at Thr-4–Arg-499 folds into the UvrD-like helicase ATP-binding domain. Ala-25–Thr-32 contacts ATP. Positions Glu-526–Gly-853 constitute a UvrD-like helicase C-terminal domain.

The protein belongs to the helicase family. AddA subfamily. Heterodimer of AddA and AddB/RexB. Mg(2+) is required as a cofactor.

It carries out the reaction Couples ATP hydrolysis with the unwinding of duplex DNA by translocating in the 3'-5' direction.. The enzyme catalyses ATP + H2O = ADP + phosphate + H(+). Functionally, the heterodimer acts as both an ATP-dependent DNA helicase and an ATP-dependent, dual-direction single-stranded exonuclease. Recognizes the chi site generating a DNA molecule suitable for the initiation of homologous recombination. The AddA nuclease domain is required for chi fragment generation; this subunit has the helicase and 3' -&gt; 5' nuclease activities. The sequence is that of ATP-dependent helicase/nuclease subunit A from Clostridium botulinum (strain ATCC 19397 / Type A).